A 62-amino-acid polypeptide reads, in one-letter code: Potassium channel toxin gamma-KTx 1.1 (62 aa).

The first 20 residues, methionine 1–methionine 20, serve as a signal peptide directing secretion. Cystine bridges form between cysteine 25–cysteine 43, cysteine 31–cysteine 54, cysteine 40–cysteine 59, and cysteine 44–cysteine 61.

It belongs to the ergtoxin family. Gamma-KTx 1 subfamily. In terms of processing, after protein storage at -20 Celsius degrees during a couple of months, the Met-55 of a small number of toxins is naturally oxidized. This oxidized form is about three orders of magnitude less efficient (IC(50)=15 uM) than non-oxidized form. As to expression, expressed by the venom gland.

The protein resides in the secreted. Blocks human and rat Kv11.1/KCNH2/ERG1 and Kv11.3/KCNH7/ERG3, as well as rat (but not human) Kv11.2/KCNH6/ERG2 by binding to channel outer vestibule (S5P domain) with a 1:1 stoichiometry. Inhibition data are the following: hERG1 (reversible, IC(50)~7 nM), rERG1 (reversible, Kd=6.8 nM), rERG2 (irreversible, Kd=2.8 nM), hERG3 (irreversible, Kd=4.05 nM) and rERG3 (reversible, Kd=38.1 nM) potassium channels. The toxin potency is not affected by elevating potassium ion concentration from 2 to 98 mM. This toxin only blocks channels in a closed state. At high toxin concentrations, block of Kv11.1/KCNH2/ERG1 macroscopic current is incomplete (93.5%). This suggests a kinetic mechanism model with two different states of toxin-channel binding (T+C=TC*=TC; in the TC* state, the toxin binds the channel but does not occlude the pore, whereas in the TC state the toxin binds and occludes the pore). In this model, incomplete block is explained by the relatively fast dissociation rate from the blocked channel conformation (TC) relative to the rate of conversion of the toxin-channel encounter complex (TC*) to the blocked channel conformation (TC). This Centruroides noxius (Mexican scorpion) protein is Potassium channel toxin gamma-KTx 1.1.